A 26-amino-acid chain; its full sequence is Delta-hemolysin (26 aa).

N-formylmethionine is present on Met-1.

This sequence belongs to the delta-lysin family.

It localises to the secreted. It is found in the host cell membrane. Lyses erythrocytes and many other mammalian cells. In Staphylococcus aureus (strain Mu50 / ATCC 700699), this protein is Delta-hemolysin (hld).